The primary structure comprises 139 residues: Large ribosomal subunit protein uL16 (139 aa).

Belongs to the universal ribosomal protein uL16 family. In terms of assembly, part of the 50S ribosomal subunit.

In terms of biological role, binds 23S rRNA and is also seen to make contacts with the A and possibly P site tRNAs. This is Large ribosomal subunit protein uL16 from Rippkaea orientalis (strain PCC 8801 / RF-1) (Cyanothece sp. (strain PCC 8801)).